The sequence spans 128 residues: Glycine cleavage system H protein (128 aa).

Residues 25 to 107 (IITVGITHHA…YGAGWFFKLK (83 aa)) form the Lipoyl-binding domain. N6-lipoyllysine is present on Lys66.

Belongs to the GcvH family. The glycine cleavage system is composed of four proteins: P, T, L and H. (R)-lipoate is required as a cofactor.

Its function is as follows. The glycine cleavage system catalyzes the degradation of glycine. The H protein shuttles the methylamine group of glycine from the P protein to the T protein. In Neisseria meningitidis serogroup A / serotype 4A (strain DSM 15465 / Z2491), this protein is Glycine cleavage system H protein.